Consider the following 413-residue polypeptide: Aspartate aminotransferase, cytoplasmic (413 aa).

Glycine 39, tryptophan 141, and asparagine 195 together coordinate L-aspartate. Lysine 259 is subject to N6-(pyridoxal phosphate)lysine. Residue arginine 387 participates in L-aspartate binding.

Belongs to the class-I pyridoxal-phosphate-dependent aminotransferase family. As to quaternary structure, homodimer. Pyridoxal 5'-phosphate is required as a cofactor.

Its subcellular location is the cytoplasm. It catalyses the reaction L-aspartate + 2-oxoglutarate = oxaloacetate + L-glutamate. The catalysed reaction is L-cysteine + 2-oxoglutarate = 2-oxo-3-sulfanylpropanoate + L-glutamate. It carries out the reaction (2S)-2-aminobutanoate + 2-oxoglutarate = 2-oxobutanoate + L-glutamate. The enzyme catalyses 3-sulfino-L-alanine + 2-oxoglutarate = 3-sulfinopyruvate + L-glutamate. In terms of biological role, biosynthesis of L-glutamate from L-aspartate or L-cysteine. Important regulator of levels of glutamate, the major excitatory neurotransmitter of the vertebrate central nervous system. Acts as a scavenger of glutamate in brain neuroprotection. The aspartate aminotransferase activity is involved in hepatic glucose synthesis during development and in adipocyte glyceroneogenesis. Using L-cysteine as substrate, regulates levels of mercaptopyruvate, an important source of hydrogen sulfide. Mercaptopyruvate is converted into H(2)S via the action of 3-mercaptopyruvate sulfurtransferase (3MST). Hydrogen sulfide is an important synaptic modulator and neuroprotectant in the brain. The protein is Aspartate aminotransferase, cytoplasmic of Sus scrofa (Pig).